Reading from the N-terminus, the 544-residue chain is Membrane protein insertase YidC (544 aa).

6 consecutive transmembrane segments (helical) span residues leucine 13–leucine 33, leucine 321–proline 341, tryptophan 343–phenylalanine 363, leucine 409–valine 429, leucine 461–leucine 481, and methionine 506–isoleucine 526.

This sequence belongs to the OXA1/ALB3/YidC family. Type 1 subfamily. As to quaternary structure, interacts with the Sec translocase complex via SecD. Specifically interacts with transmembrane segments of nascent integral membrane proteins during membrane integration.

Its subcellular location is the cell inner membrane. Functionally, required for the insertion and/or proper folding and/or complex formation of integral membrane proteins into the membrane. Involved in integration of membrane proteins that insert both dependently and independently of the Sec translocase complex, as well as at least some lipoproteins. Aids folding of multispanning membrane proteins. The protein is Membrane protein insertase YidC of Borreliella afzelii (strain PKo) (Borrelia afzelii).